A 330-amino-acid polypeptide reads, in one-letter code: Succinylglutamate desuccinylase (330 aa).

3 residues coordinate Zn(2+): His-53, Glu-56, and His-147. Glu-210 is an active-site residue.

Belongs to the AspA/AstE family. Succinylglutamate desuccinylase subfamily. The cofactor is Zn(2+).

The enzyme catalyses N-succinyl-L-glutamate + H2O = L-glutamate + succinate. It participates in amino-acid degradation; L-arginine degradation via AST pathway; L-glutamate and succinate from L-arginine: step 5/5. Functionally, transforms N(2)-succinylglutamate into succinate and glutamate. This chain is Succinylglutamate desuccinylase, found in Yersinia enterocolitica serotype O:8 / biotype 1B (strain NCTC 13174 / 8081).